A 322-amino-acid polypeptide reads, in one-letter code: NADH-quinone oxidoreductase subunit H (322 aa).

Transmembrane regions (helical) follow at residues 14 to 34 (IFMH…YMSF), 81 to 101 (YIFV…IPVI), 114 to 134 (VGVL…LLAG), 149 to 169 (SIAQ…GIVA), 186 to 206 (LWNI…GMAL), 237 to 257 (FFIS…TLFF), 265 to 285 (FPPV…FVLI), and 302 to 322 (WKFL…YILI).

The protein belongs to the complex I subunit 1 family. In terms of assembly, NDH-1 is composed of 13 different subunits. Subunits NuoA, H, J, K, L, M, N constitute the membrane sector of the complex.

It is found in the cell inner membrane. It catalyses the reaction a quinone + NADH + 5 H(+)(in) = a quinol + NAD(+) + 4 H(+)(out). In terms of biological role, NDH-1 shuttles electrons from NADH, via FMN and iron-sulfur (Fe-S) centers, to quinones in the respiratory chain. The immediate electron acceptor for the enzyme in this species is believed to be ubiquinone. Couples the redox reaction to proton translocation (for every two electrons transferred, four hydrogen ions are translocated across the cytoplasmic membrane), and thus conserves the redox energy in a proton gradient. This subunit may bind ubiquinone. The protein is NADH-quinone oxidoreductase subunit H of Blochmanniella floridana.